Here is a 370-residue protein sequence, read N- to C-terminus: GDSL esterase/lipase At1g33811 (370 aa).

A signal peptide spans Met-1–Ser-24. Ser-41 (nucleophile) is an active-site residue. N-linked (GlcNAc...) asparagine glycans are attached at residues Asn-203, Asn-241, and Asn-242. Active-site residues include Asp-336 and His-339.

Belongs to the 'GDSL' lipolytic enzyme family.

Its subcellular location is the secreted. The chain is GDSL esterase/lipase At1g33811 from Arabidopsis thaliana (Mouse-ear cress).